A 293-amino-acid polypeptide reads, in one-letter code: Homoserine kinase (293 aa).

Residue 83–93 (RPKSGLGSSGA) participates in ATP binding.

It belongs to the GHMP kinase family. Homoserine kinase subfamily.

It localises to the cytoplasm. The catalysed reaction is L-homoserine + ATP = O-phospho-L-homoserine + ADP + H(+). Its pathway is amino-acid biosynthesis; L-threonine biosynthesis; L-threonine from L-aspartate: step 4/5. In terms of biological role, catalyzes the ATP-dependent phosphorylation of L-homoserine to L-homoserine phosphate. This is Homoserine kinase from Pyrococcus horikoshii (strain ATCC 700860 / DSM 12428 / JCM 9974 / NBRC 100139 / OT-3).